The sequence spans 310 residues: tRNA uridine(34) hydroxylase (310 aa).

Residues 124–218 form the Rhodanese domain; it reads SDPEVLLIDT…YFEEVPQEES (95 aa). Cys178 functions as the Cysteine persulfide intermediate in the catalytic mechanism.

It belongs to the TrhO family.

The enzyme catalyses uridine(34) in tRNA + AH2 + O2 = 5-hydroxyuridine(34) in tRNA + A + H2O. Catalyzes oxygen-dependent 5-hydroxyuridine (ho5U) modification at position 34 in tRNAs. The protein is tRNA uridine(34) hydroxylase of Pseudomonas putida (strain ATCC 700007 / DSM 6899 / JCM 31910 / BCRC 17059 / LMG 24140 / F1).